We begin with the raw amino-acid sequence, 450 residues long: Neuronal acetylcholine receptor subunit alpha-10 (450 aa).

Positions 1-24 (MGLRSHHLSLGLLLLFLLPAECLG) are cleaved as a signal peptide. The Extracellular portion of the chain corresponds to 25-237 (AEGRLALKLF…FTLLLRRRAA (213 aa)). Residues N40 and N56 are each glycosylated (N-linked (GlcNAc...) asparagine). Disulfide bonds link C154-C168 and C218-C219. 3 consecutive transmembrane segments (helical) span residues 238-258 (AYVCNLLLPCVLISLLAPLAF), 268-288 (VSLGVTVLLALTVFQLLLAES), and 302-322 (YMATMTMVTFSTALTILIMNL). Topologically, residues 323-428 (HYCGPSVRPV…WKRLARVMDR (106 aa)) are cytoplasmic. The disordered stretch occupies residues 355-380 (EPCGQSRPPELSPSPQSPEGGAGPPA). The chain crosses the membrane as a helical span at residues 429–449 (FFLAIFFSMALVMSLLVLVQA).

It belongs to the ligand-gated ion channel (TC 1.A.9) family. Acetylcholine receptor (TC 1.A.9.1) subfamily. Alpha-10/CHRNA10 sub-subfamily. Forms homo- or heterooligomeric channels in conjunction with CHRNA10. The native outer hair cell receptor may be composed of CHRNA9:CHRNA10 heterooligomers. Found in the stoichiometric form (CHRNA9)2:(CHRNA10)3. Expressed in inner-ear tissue, tonsil, immortalized B-cells, cultured T-cells and peripheral blood lymphocytes.

The protein resides in the synaptic cell membrane. The protein localises to the cell membrane. The catalysed reaction is Ca(2+)(in) = Ca(2+)(out). The enzyme catalyses K(+)(in) = K(+)(out). It catalyses the reaction Na(+)(in) = Na(+)(out). It carries out the reaction Mg(2+)(in) = Mg(2+)(out). Activated by a myriad of ligands such as acetylcholine. AChR activity is inhibited by the antagonists alpha-conotoxins RgIA and GeXXA, small disulfide-constrained peptides from cone snails. In terms of biological role, component of neuronal acetylcholine receptors (nAChRs) that function as pentameric, ligand-gated cation channels with high calcium permeability. nAChRs are excitatory neurotrasnmitter receptors formed by a collection of nAChR subunits. Each nAchR subunit confers differential attributes to channel properties, including activation, deactivation and desensitization kinetics, pH sensitivity, cation permeability, and binding to allosteric modulators. Forms heteropentamers with CHRNA9. Expressed in the inner ear, in sympathetic neurons and in other non-neuronal cells, such as skin keratinocytes and lymphocytes. nAChR formed by CHRNA9:CHRNA10 is involved in modulation of auditory stimuli. The channel is permeable to a range of divalent cations including calcium, the influx of which may activate a potassium current which hyperpolarizes the cell membrane. In the ear, mediates synaptic transmission between efferent olivocochlear fibers and hair cells of the cochlea, this may lead to a reduction in basilar membrane motion, altering the activity of auditory nerve fibers and reducing the range of dynamic hearing. This may protect against acoustic trauma. May also regulate keratinocyte adhesion. The chain is Neuronal acetylcholine receptor subunit alpha-10 from Homo sapiens (Human).